A 184-amino-acid chain; its full sequence is Alpha-tubulin N-acetyltransferase (184 aa).

Positions 1–174 (MNIPPEKMHN…NNFVIFAEYF (174 aa)) constitute an N-acetyltransferase domain. Acetyl-CoA-binding positions include 108–121 (FYIQ…GLGL) and 144–153 (SYKLQSFLKK).

Belongs to the acetyltransferase ATAT1 family.

The catalysed reaction is L-lysyl-[alpha-tubulin] + acetyl-CoA = N(6)-acetyl-L-lysyl-[alpha-tubulin] + CoA + H(+). In terms of biological role, specifically acetylates 'Lys-40' in alpha-tubulin on the lumenal side of microtubules. Promotes microtubule destabilization and accelerates microtubule dynamics; this activity may be independent of acetylation activity. Acetylates alpha-tubulin with a slow enzymatic rate, due to a catalytic site that is not optimized for acetyl transfer. Enters the microtubule through each end and diffuses quickly throughout the lumen of microtubules. Acetylates only long/old microtubules because of its slow acetylation rate since it does not have time to act on dynamically unstable microtubules before the enzyme is released. The chain is Alpha-tubulin N-acetyltransferase from Plasmodium knowlesi (strain H).